The primary structure comprises 149 residues: Large ribosomal subunit protein bL9 (149 aa).

It belongs to the bacterial ribosomal protein bL9 family.

Binds to the 23S rRNA. This Pasteurella multocida (strain Pm70) protein is Large ribosomal subunit protein bL9.